A 104-amino-acid polypeptide reads, in one-letter code: Large ribosomal subunit protein bL21 (104 aa).

It belongs to the bacterial ribosomal protein bL21 family. Part of the 50S ribosomal subunit. Contacts protein L20.

This protein binds to 23S rRNA in the presence of protein L20. This chain is Large ribosomal subunit protein bL21, found in Pseudomonas putida (strain W619).